Reading from the N-terminus, the 50-residue chain is Sproutin (50 aa).

Ser8 bears the Phosphoserine; by PKC mark.

In terms of tissue distribution, brain.

Neurite outgrowth factor. The chain is Sproutin from Rattus norvegicus (Rat).